Here is a 179-residue protein sequence, read N- to C-terminus: Probable chorismate pyruvate-lyase (179 aa).

Substrate is bound by residues arginine 82, leucine 120, and glutamate 165.

It belongs to the UbiC family.

It localises to the cytoplasm. The catalysed reaction is chorismate = 4-hydroxybenzoate + pyruvate. Its pathway is cofactor biosynthesis; ubiquinone biosynthesis. In terms of biological role, removes the pyruvyl group from chorismate, with concomitant aromatization of the ring, to provide 4-hydroxybenzoate (4HB) for the ubiquinone pathway. This is Probable chorismate pyruvate-lyase from Vibrio parahaemolyticus serotype O3:K6 (strain RIMD 2210633).